The primary structure comprises 794 residues: Interphotoreceptor matrix proteoglycan 1 (794 aa).

An N-terminal signal peptide occupies residues Met1–Gly20. Residues Met202–Pro213 are compositionally biased toward polar residues. Disordered stretches follow at residues Met202–Thr221, Lys314–Thr355, and Ser413–Ser449. One can recognise an SEA 1 domain in the interval Leu236–Ser357. Basic and acidic residues predominate over residues Asn332–Glu351. Residues Thr425 and Thr439 are each glycosylated (O-linked (GalNAc...) threonine). Ser443 carries O-linked (GalNAc...) serine glycosylation. 2 O-linked (GalNAc...) threonine glycosylation sites follow: Thr448 and Thr450. In terms of domain architecture, SEA 2 spans Arg579 to Gln692. N-linked (GlcNAc...) asparagine glycosylation is present at Asn624. Residues Lys629 to Arg637 carry the Heparin- and hyaluronan-binding motif. An N-linked (GlcNAc...) asparagine glycan is attached at Asn656.

In terms of processing, highly glycosylated (N- and O-linked carbohydrates and sialic acid).

The protein resides in the cell projection. It localises to the cilium. It is found in the photoreceptor outer segment. Its subcellular location is the secreted. The protein localises to the extracellular space. The protein resides in the extracellular matrix. It localises to the interphotoreceptor matrix. It is found in the photoreceptor inner segment. In terms of biological role, chondroitin sulfate-, heparin- and hyaluronan-binding protein. May serve to form a basic macromolecular scaffold comprising the insoluble interphotoreceptor matrix. This is Interphotoreceptor matrix proteoglycan 1 (IMPG1) from Bos taurus (Bovine).